The chain runs to 1103 residues: Retinal guanylyl cyclase 1 (1103 aa).

An N-terminal signal peptide occupies residues 1–51 (MTACARRAGGLPDPGLCGPAWWAPSLPRLPRALPRLPLLLLLLLLQPPALS). The Extracellular portion of the chain corresponds to 52-462 (AVFTVGVLGP…PNNICGGGLE (411 aa)). A glycan (N-linked (GlcNAc...) asparagine) is linked at Asn297. A helical membrane pass occupies residues 463-487 (PGLVFLGFLLVVGMGLAGAFLAHYV). The Cytoplasmic segment spans residues 488–1103 (RHRLLHMQMV…LEKARPGQFS (616 aa)). Residues 525-808 (QGSRSSLGAR…DHTFDLFKNI (284 aa)) form the Protein kinase domain. Residues 880-1010 (TLYFSDIVGF…DTVNTASRME (131 aa)) form the Guanylate cyclase domain. The tract at residues 1065–1103 (PIPKPPDLQPGSSNHGISLQEIPPERRRKLEKARPGQFS) is disordered.

The protein belongs to the adenylyl cyclase class-4/guanylyl cyclase family. In terms of assembly, homodimer; requires homodimerization for guanylyl cyclase activity. Interacts with RD3; promotes the exit of GUCY2D from the endoplasmic reticulum and its trafficking to the photoreceptor outer segments. Interaction with RD3 negatively regulates guanylate cyclase activity. Retina.

Its subcellular location is the photoreceptor outer segment membrane. The protein resides in the endoplasmic reticulum membrane. The enzyme catalyses GTP = 3',5'-cyclic GMP + diphosphate. Activated by GUCA1A when free calcium ions concentration is low, and inhibited by GUCA1A when free calcium ions concentration is high. Negatively regulated by RD3; inhibits the basal and GUCA1A-stimulated guanylate cyclase activity. Functionally, catalyzes the synthesis of cyclic GMP (cGMP) in rods and cones of photoreceptors. Plays an essential role in phototransduction, by mediating cGMP replenishment. May also participate in the trafficking of membrane-asociated proteins to the photoreceptor outer segment membrane. In Homo sapiens (Human), this protein is Retinal guanylyl cyclase 1 (GUCY2D).